We begin with the raw amino-acid sequence, 321 residues long: Tyrosine recombinase XerC (321 aa).

The region spanning 16–107 (PSIAQEMTRW…GLRSFGRFLE (92 aa)) is the Core-binding (CB) domain. One can recognise a Tyr recombinase domain in the interval 128 to 315 (SLPKPLPMAS…DSERLLEVYA (188 aa)). Residues Arg173, Lys199, His267, Arg270, and His293 contribute to the active site. Tyr302 functions as the O-(3'-phospho-DNA)-tyrosine intermediate in the catalytic mechanism.

Belongs to the 'phage' integrase family. XerC subfamily. As to quaternary structure, forms a cyclic heterotetrameric complex composed of two molecules of XerC and two molecules of XerD.

The protein resides in the cytoplasm. Site-specific tyrosine recombinase, which acts by catalyzing the cutting and rejoining of the recombining DNA molecules. The XerC-XerD complex is essential to convert dimers of the bacterial chromosome into monomers to permit their segregation at cell division. It also contributes to the segregational stability of plasmids. The chain is Tyrosine recombinase XerC from Bradyrhizobium diazoefficiens (strain JCM 10833 / BCRC 13528 / IAM 13628 / NBRC 14792 / USDA 110).